The chain runs to 1001 residues: UPF0182 protein Mjls_1469 (1001 aa).

The next 7 helical transmembrane spans lie at 16-36, 61-81, 112-132, 174-194, 209-229, 258-278, and 286-306; these read VLIG…RFID, VVVF…GLAL, LFGF…AQSY, FVAT…FGGI, IQLV…YWLD, KLIL…AIVL, and IGVV…PLVV. Low complexity predominate over residues 900-929; the sequence is ATGPAPANLPDGQPAAQPPNGQQPAAQTPG. The interval 900–977 is disordered; that stretch reads ATGPAPANLP…MSGLQDAQRS (78 aa).

Belongs to the UPF0182 family.

Its subcellular location is the cell membrane. The sequence is that of UPF0182 protein Mjls_1469 from Mycobacterium sp. (strain JLS).